We begin with the raw amino-acid sequence, 153 residues long: Small ribosomal subunit protein uS9 (153 aa).

Low complexity predominate over residues 1-19; that stretch reads MTAPADEAPAVEDAPVAED. Disordered regions lie at residues 1–23 and 121–153; these read MTAP…IAPV and LKKA…YSKR. Residues 129 to 138 show a composition bias toward basic and acidic residues; sequence RDSREKERKK. A compositionally biased stretch (basic residues) spans 139-153; it reads YGLKKARKAPQYSKR.

Belongs to the universal ribosomal protein uS9 family.

The sequence is that of Small ribosomal subunit protein uS9 from Saccharopolyspora erythraea (strain ATCC 11635 / DSM 40517 / JCM 4748 / NBRC 13426 / NCIMB 8594 / NRRL 2338).